The primary structure comprises 399 residues: MNVHEYQAKELLAKYGVGIPAGIAALTVEEAVAAAKQLPGPLYVVKAQIHAGGRGKGKFKELPADAKGGVRLAKSIEEVEAFAKEMLGNTLVTVQTGEAGKQVNRLYVTDGVDIDKEYYLSMVVDRATGRVAIIVSTEGGMDIEEVAHSTPEKIATIVIDPAEGFMPHHGRAVGFALKLSGDLLKQAAKIAEQLYTAFVALDCSMLEINPLVQTKDGNLLVLDTKMSFDSNALYRHPDVVALRDETEEDPAEIEASKYDLAYIKLDGNIGCMVNGAGLAMATMDIIKLNGEFPANFLDVGGGANKEKVTAAFKIILKDPAVKGILVNIFGGIMKCDIIAEGIVAAAKEVNLSVPLVVRLEGTNVQQGKDILANSGLPIVPANDLGDAAKKIVAEVRAVA.

The ATP-grasp domain occupies 9-254 (KELLAKYGVG…ETEEDPAEIE (246 aa)). ATP is bound by residues Lys46, 53–55 (GRG), Val112, and Glu117. Mg(2+) contacts are provided by Asn209 and Asp223. Substrate-binding positions include Asn274 and 331–333 (GIM).

The protein belongs to the succinate/malate CoA ligase beta subunit family. Heterotetramer of two alpha and two beta subunits. Mg(2+) is required as a cofactor.

It catalyses the reaction succinate + ATP + CoA = succinyl-CoA + ADP + phosphate. The enzyme catalyses GTP + succinate + CoA = succinyl-CoA + GDP + phosphate. Its pathway is carbohydrate metabolism; tricarboxylic acid cycle; succinate from succinyl-CoA (ligase route): step 1/1. Its function is as follows. Succinyl-CoA synthetase functions in the citric acid cycle (TCA), coupling the hydrolysis of succinyl-CoA to the synthesis of either ATP or GTP and thus represents the only step of substrate-level phosphorylation in the TCA. The beta subunit provides nucleotide specificity of the enzyme and binds the substrate succinate, while the binding sites for coenzyme A and phosphate are found in the alpha subunit. The protein is Succinate--CoA ligase [ADP-forming] subunit beta of Novosphingobium aromaticivorans (strain ATCC 700278 / DSM 12444 / CCUG 56034 / CIP 105152 / NBRC 16084 / F199).